The chain runs to 205 residues: Helix-loop-helix protein 4 (205 aa).

Positions 3–16 (MVVAKRNARERTRV) are basic motif. In terms of domain architecture, bHLH spans 3 to 56 (MVVAKRNARERTRVHTVNQAFLVLKQHLPSLRQFTKRVSKLRILNAAITYIDTL). Residues 17–56 (HTVNQAFLVLKQHLPSLRQFTKRVSKLRILNAAITYIDTL) form a helix-loop-helix motif region.

As to expression, expressed in the ADL sensory neurons.

It is found in the nucleus. Its function is as follows. Acts as a transcriptional regulator. May mediate transcriptional activation by binding to the E-box motif 5'-CANNTG-3'. Required for the correct morphology, terminal identity and function of the ADL sensory neurons by controlling the expression of the ADL-specific gene repertoire, including chemoreceptor encoding genes, ion channel encoding genes, neuropeptides and the neurotransmitter eat-4. Regulates the expression of the srh-234 chemoreceptor encoding gene in the ADL neurons under feeding conditions. Plays a role in the chemorepulsive response toward ascaroside pheromones mediated by the ADL sensory neurons. The polypeptide is Helix-loop-helix protein 4 (hlh-4) (Caenorhabditis elegans).